Consider the following 222-residue polypeptide: N-(5'-phosphoribosyl)anthranilate isomerase (222 aa).

It belongs to the TrpF family.

It carries out the reaction N-(5-phospho-beta-D-ribosyl)anthranilate = 1-(2-carboxyphenylamino)-1-deoxy-D-ribulose 5-phosphate. The protein operates within amino-acid biosynthesis; L-tryptophan biosynthesis; L-tryptophan from chorismate: step 3/5. The sequence is that of N-(5'-phosphoribosyl)anthranilate isomerase from Prosthecochloris aestuarii (strain DSM 271 / SK 413).